The chain runs to 369 residues: Muscleblind-like protein 1 (369 aa).

4 C3H1-type zinc fingers span residues 13–41, 47–73, 178–206, and 214–240; these read WLTL…HPSK, NGRV…HPPP, TDRL…HPAD, and DNTV…HPPA.

It belongs to the muscleblind family.

The protein localises to the nucleus. It is found in the cytoplasm. It localises to the cytoplasmic granule. In terms of biological role, involved in pre-mRNA alternative splicing regulation. Binds to CUG triplet repeat in RNA. The polypeptide is Muscleblind-like protein 1 (MBNL1) (Gallus gallus (Chicken)).